We begin with the raw amino-acid sequence, 364 residues long: MLWPALRSVLFQLDPERVHHLAHWALHRVPPALARARRPAPVPALAVRCMGLDFDGPMGLAAGFDKGDVALPGLFGLGFSHVEIGTITPRPQPGNDRPRLFRLPEHRALLNRMGFNNEGMEACARRLAALPAAARLGPVGINVGKNKATPNEDAASDYLACIERLHPYADYLVVNISSPNTPGLRQLQEREALDRLLRACVRHLAERAPGKPLLVKLAPDLSPEALDEAVDVAIAAGAAGIVATNTTLSRAGVERHPRAAEAGGLSGAPLERLATEVVRRCYARAAGRVPIVGVGGVMDAEGAYAKIRAGATLVQAYTGLIYGGPGFVGRVNAGLARLLERDGFSTLSDAVGADHRQGGGKAAG.

FMN is bound by residues A62–K66 and T86. A substrate-binding site is contributed by K66. Residue N111 to F115 coordinates substrate. FMN contacts are provided by N142 and N175. Residue N175 participates in substrate binding. The Nucleophile role is filled by S178. N180 is a binding site for substrate. FMN contacts are provided by K216 and T244. Residue N245–T246 coordinates substrate. Residues G267, G296, and Y317 to T318 each bind FMN.

This sequence belongs to the dihydroorotate dehydrogenase family. Type 2 subfamily. Monomer. FMN serves as cofactor.

Its subcellular location is the cell membrane. It catalyses the reaction (S)-dihydroorotate + a quinone = orotate + a quinol. Its pathway is pyrimidine metabolism; UMP biosynthesis via de novo pathway; orotate from (S)-dihydroorotate (quinone route): step 1/1. Functionally, catalyzes the conversion of dihydroorotate to orotate with quinone as electron acceptor. This chain is Dihydroorotate dehydrogenase (quinone), found in Anaeromyxobacter dehalogenans (strain 2CP-C).